Here is a 315-residue protein sequence, read N- to C-terminus: Ribosomal RNA small subunit methyltransferase H (315 aa).

Residues 33 to 35 (GGH), D52, F84, D106, and Q113 each bind S-adenosyl-L-methionine. A disordered region spans residues 290–315 (PITASTSELENNNRSHSAKLRVAEKL). The span at 292-304 (TASTSELENNNRS) shows a compositional bias: polar residues.

It belongs to the methyltransferase superfamily. RsmH family.

The protein localises to the cytoplasm. It carries out the reaction cytidine(1402) in 16S rRNA + S-adenosyl-L-methionine = N(4)-methylcytidine(1402) in 16S rRNA + S-adenosyl-L-homocysteine + H(+). Specifically methylates the N4 position of cytidine in position 1402 (C1402) of 16S rRNA. The protein is Ribosomal RNA small subunit methyltransferase H of Lactobacillus helveticus (strain DPC 4571).